A 1092-amino-acid polypeptide reads, in one-letter code: Rho GTPase-activating protein 7 (1092 aa).

An SAM domain is found at 11-78; the sequence is LTQIEAKEAC…LNKCAVMKLE (68 aa). S86, S89, and S129 each carry phosphoserine. 4 disordered regions span residues 121 to 179, 297 to 330, 409 to 434, and 492 to 553; these read PKQD…DATT, RSVSNSTQTSSSSSQSETSSAVSTPSPVTRTRSL, GPGHLSLRRENSHDSPKELKRRNSSS, and SDEG…SGVG. A compositionally biased stretch (polar residues) spans 130-143; that stretch reads PDNSRLQSATSHES. Composition is skewed to low complexity over residues 154–174 and 299–325; these read VASVRSLSSTSSSVPTHAAHS and VSNSTQTSSSSSQSETSSAVSTPSPVT. Positions 275–448 are focal adhesion-targeting (FAT); the sequence is QLNCVEISAL…RLSIYDNVPG (174 aa). S322 carries the post-translational modification Phosphoserine. The segment covering 415-426 has biased composition (basic and acidic residues); that stretch reads LRRENSHDSPKE. A compositionally biased stretch (polar residues) spans 500–512; the sequence is ALDSVSPCPSSPK. Positions 514-526 are enriched in basic and acidic residues; the sequence is IHLDVDHDRRTPS. A compositionally biased stretch (polar residues) spans 527 to 536; it reads DLDSTGNSLN. Residues 615–637 form a polybasic cluster (PBR) region; the sequence is KHGFSWAVPKFMKRIKVPDYKDR. The Rho-GAP domain maps to 642-848; it reads VPLTVNVQRS…HMIAECKKLF (207 aa). In terms of domain architecture, START spans 878-1085; that stretch reads NSDQPADYRH…RDSFSNQNTE (208 aa).

As to quaternary structure, interacts with EF1A1, facilitates EF1A1 distribution to the membrane periphery and ruffles upon growth factor stimulation and suppresses cell migration. Interacts with tensin TNS1 (via N-terminus); the interaction is decreased by phosphorylation of TNS1. Interacts with TNS3 and PTEN; in resting cells, interacts with TNS3 (via C2 tensin-type domain) but, following growth factor stimulation, TNS3 and PTEN are phosphorylated which leads to weakened interaction with TNS3 and enhanced interaction with PTEN. Interacts (via C-terminus) with tensin TNS4 (via SH2 domain); the interaction is independent of tyrosine phosphorylation of DLC1. In terms of tissue distribution, widely expressed with the highest levels in heart, liver and lung.

The protein localises to the cytoplasm. Its subcellular location is the cell junction. The protein resides in the focal adhesion. It is found in the membrane. Functions as a GTPase-activating protein for the small GTPases RHOA, RHOB, RHOC and CDC42, terminating their downstream signaling. This induces morphological changes and detachment through cytoskeletal reorganization, playing a critical role in biological processes such as cell migration and proliferation. Also functions in vivo as an activator of the phospholipase PLCD1. Active DLC1 increases cell migration velocity but reduces directionality. Required for growth factor-induced epithelial cell migration; in resting cells, interacts with TNS3 while PTEN interacts with the p85 regulatory subunit of the PI3K kinase complex but growth factor stimulation induces phosphorylation of TNS3 and PTEN, causing them to change their binding preference so that PTEN interacts with DLC1 and TNS3 interacts with p85. The PTEN-DLC1 complex translocates to the posterior of migrating cells to activate RHOA while the TNS3-p85 complex translocates to the leading edge of migrating cells to promote RAC1 activation. This chain is Rho GTPase-activating protein 7 (Dlc1), found in Mus musculus (Mouse).